The primary structure comprises 643 residues: Pesticidal crystal protein Cry11Aa (643 aa).

This sequence belongs to the delta endotoxin family.

Its function is as follows. Promotes colloidosmotic lysis by binding to the midgut epithelial cells of mosquitos. This is Pesticidal crystal protein Cry11Aa (cry11Aa) from Bacillus thuringiensis subsp. israelensis.